The chain runs to 136 residues: Active regulator of SIRT1 (136 aa).

Arginine 7 carries the post-translational modification Citrulline. Residues 13–58 are disordered; it reads LAASEAPRDPPGQAKPRGAPVKRPRKTKAIQAQKLRNSAKGKVPKS. Serine 84 bears the Phosphoserine mark.

Belongs to the AROS family. In terms of assembly, part of the small subunit (SSU) processome, composed of more than 70 proteins and the RNA chaperone small nucleolar RNA (snoRNA) U3. Interacts with RPS19; the interaction is direct and mediates the integration of RPS19 in state post-A1. Interacts with SIRT1. Post-translationally, citrullinated by PADI4. In terms of tissue distribution, widely expressed (at protein level).

It localises to the nucleus. The protein localises to the nucleolus. Its function is as follows. Part of the small subunit (SSU) processome, first precursor of the small eukaryotic ribosomal subunit. During the assembly of the SSU processome in the nucleolus, many ribosome biogenesis factors, an RNA chaperone and ribosomal proteins associate with the nascent pre-rRNA and work in concert to generate RNA folding, modifications, rearrangements and cleavage as well as targeted degradation of pre-ribosomal RNA by the RNA exosome. Acts as a chaperone that specifically mediates the integration of RPS19 in state post-A1. Direct regulator of SIRT1. Enhances SIRT1-mediated deacetylation of p53/TP53, thereby participating in inhibition of p53/TP53-mediated transcriptional activity. The sequence is that of Active regulator of SIRT1 from Homo sapiens (Human).